The sequence spans 575 residues: Proline--tRNA ligase, cytoplasmic (575 aa).

The protein belongs to the class-II aminoacyl-tRNA synthetase family.

Its subcellular location is the cytoplasm. The enzyme catalyses tRNA(Pro) + L-proline + ATP = L-prolyl-tRNA(Pro) + AMP + diphosphate. The polypeptide is Proline--tRNA ligase, cytoplasmic (PRS) (Candida albicans (Yeast)).